A 427-amino-acid polypeptide reads, in one-letter code: Enolase (427 aa).

(2R)-2-phosphoglycerate is bound at residue Q163. Catalysis depends on E205, which acts as the Proton donor. Residues D242, E285, and D312 each contribute to the Mg(2+) site. 4 residues coordinate (2R)-2-phosphoglycerate: K337, R366, S367, and K388. K337 functions as the Proton acceptor in the catalytic mechanism.

It belongs to the enolase family. It depends on Mg(2+) as a cofactor.

The protein localises to the cytoplasm. Its subcellular location is the secreted. It is found in the cell surface. It catalyses the reaction (2R)-2-phosphoglycerate = phosphoenolpyruvate + H2O. Its pathway is carbohydrate degradation; glycolysis; pyruvate from D-glyceraldehyde 3-phosphate: step 4/5. Functionally, catalyzes the reversible conversion of 2-phosphoglycerate (2-PG) into phosphoenolpyruvate (PEP). It is essential for the degradation of carbohydrates via glycolysis. The chain is Enolase from Burkholderia vietnamiensis (strain G4 / LMG 22486) (Burkholderia cepacia (strain R1808)).